A 388-amino-acid chain; its full sequence is Chorismate synthase (388 aa).

Residues Arg39 and Arg45 each contribute to the NADP(+) site. FMN is bound by residues 132–134 (RSS), 251–252 (NA), Gly296, 311–315 (KPIPT), and Arg337.

This sequence belongs to the chorismate synthase family. As to quaternary structure, homotetramer. The cofactor is FMNH2.

It catalyses the reaction 5-O-(1-carboxyvinyl)-3-phosphoshikimate = chorismate + phosphate. The protein operates within metabolic intermediate biosynthesis; chorismate biosynthesis; chorismate from D-erythrose 4-phosphate and phosphoenolpyruvate: step 7/7. Catalyzes the anti-1,4-elimination of the C-3 phosphate and the C-6 proR hydrogen from 5-enolpyruvylshikimate-3-phosphate (EPSP) to yield chorismate, which is the branch point compound that serves as the starting substrate for the three terminal pathways of aromatic amino acid biosynthesis. This reaction introduces a second double bond into the aromatic ring system. The polypeptide is Chorismate synthase (Staphylococcus aureus (strain COL)).